A 326-amino-acid polypeptide reads, in one-letter code: Lipoyl synthase (326 aa).

7 residues coordinate [4Fe-4S] cluster: C74, C79, C85, C100, C104, C107, and S314. In terms of domain architecture, Radical SAM core spans 85–303 (CFGKGTATFM…EEEAYKMGFT (219 aa)).

Belongs to the radical SAM superfamily. Lipoyl synthase family. Requires [4Fe-4S] cluster as cofactor.

The protein resides in the cytoplasm. The enzyme catalyses [[Fe-S] cluster scaffold protein carrying a second [4Fe-4S](2+) cluster] + N(6)-octanoyl-L-lysyl-[protein] + 2 oxidized [2Fe-2S]-[ferredoxin] + 2 S-adenosyl-L-methionine + 4 H(+) = [[Fe-S] cluster scaffold protein] + N(6)-[(R)-dihydrolipoyl]-L-lysyl-[protein] + 4 Fe(3+) + 2 hydrogen sulfide + 2 5'-deoxyadenosine + 2 L-methionine + 2 reduced [2Fe-2S]-[ferredoxin]. It participates in protein modification; protein lipoylation via endogenous pathway; protein N(6)-(lipoyl)lysine from octanoyl-[acyl-carrier-protein]: step 2/2. Catalyzes the radical-mediated insertion of two sulfur atoms into the C-6 and C-8 positions of the octanoyl moiety bound to the lipoyl domains of lipoate-dependent enzymes, thereby converting the octanoylated domains into lipoylated derivatives. The polypeptide is Lipoyl synthase (Delftia acidovorans (strain DSM 14801 / SPH-1)).